A 70-amino-acid chain; its full sequence is Putative membrane protein insertion efficiency factor (70 aa).

It belongs to the UPF0161 family.

It is found in the cell membrane. Its function is as follows. Could be involved in insertion of integral membrane proteins into the membrane. The polypeptide is Putative membrane protein insertion efficiency factor (Clostridium novyi (strain NT)).